Here is a 557-residue protein sequence, read N- to C-terminus: Hyaluronan synthase 3 (557 aa).

Residues 1–10 (MPGKFQTGLR) lie on the Cytoplasmic side of the membrane. Residues 11–31 (VLATCLFALLVLGGILVAYVT) form a helical membrane-spanning segment. At 32 to 44 (GYQFIHTDRHHLS) the chain is on the extracellular side. A helical membrane pass occupies residues 45–65 (FGLYGAILGLHLLSQSLFAFL). Topologically, residues 66-367 (EHRKMRGGGR…NALWFHKHHL (302 aa)) are cytoplasmic. The helical transmembrane segment at 368-388 (WMTYESVVTGFFPFFLVATVV) threads the bilayer. At 389 to 398 (QLFYRGRVWN) the chain is on the extracellular side. A helical transmembrane segment spans residues 399-419 (ILLFLLTVQLVGILKATYACI). Residues 420–430 (LRGNAEMIFMS) are Cytoplasmic-facing. Residues 431–451 (LYSLLYMTSLLPAKIFAVITI) traverse the membrane as a helical segment. Residues 452-463 (KKSGWGTSGRRK) are Extracellular-facing. A helical membrane pass occupies residues 464–484 (LVVNFMGMVPVSVWFCILLGG). Over 485 to 501 (LVYTAYCQSHDPFTETE) the chain is Cytoplasmic. A helical transmembrane segment spans residues 502–522 (LLFLLTGAILYGCYWVALLSL). The Extracellular segment spans residues 523–557 (YLALIARRCGKRQELYNLALEEVSEPEPAAKAIKP).

The protein belongs to the NodC/HAS family. Requires Mg(2+) as cofactor. In terms of processing, O-GlcNAcylation increases the hyaluronan synthase activity, HAS3 stability and its plasma membrane residence. The concentration of UDP-GlcNAc controls the level of O-GlcNAc modification.

It localises to the cell membrane. The protein resides in the golgi apparatus membrane. The protein localises to the golgi apparatus. Its subcellular location is the trans-Golgi network membrane. It is found in the cytoplasmic vesicle. It catalyses the reaction [hyaluronan](n) + UDP-N-acetyl-alpha-D-glucosamine = N-acetyl-beta-D-glucosaminyl-(1-&gt;4)-[hyaluronan](n) + UDP + H(+). The enzyme catalyses N-acetyl-beta-D-glucosaminyl-(1-&gt;4)-[hyaluronan](n) + UDP-alpha-D-glucuronate = [hyaluronan](n+1) + UDP + H(+). The protein operates within glycan biosynthesis; hyaluronan biosynthesis. Catalyzes the addition of GlcNAc or GlcUA monosaccharides to the nascent hyaluronan polymer. Therefore, it is essential to hyaluronan synthesis a major component of most extracellular matrices that has a structural role in tissues architectures and regulates cell adhesion, migration and differentiation. This is one of three isoenzymes responsible for cellular hyaluronan synthesis. This Xenopus laevis (African clawed frog) protein is Hyaluronan synthase 3 (has3).